The sequence spans 278 residues: DNA repair protein RecO (278 aa).

The segment covering 1–12 has biased composition (polar residues); sequence MGTNDALTSTED. The interval 1–42 is disordered; that stretch reads MGTNDALTSTEDAVTAGANDAPLPAPPEPPRKARRATSRTSD.

The protein belongs to the RecO family.

Functionally, involved in DNA repair and RecF pathway recombination. The sequence is that of DNA repair protein RecO from Burkholderia lata (strain ATCC 17760 / DSM 23089 / LMG 22485 / NCIMB 9086 / R18194 / 383).